A 186-amino-acid polypeptide reads, in one-letter code: Ribosome-recycling factor (186 aa).

This sequence belongs to the RRF family.

The protein resides in the cytoplasm. Its function is as follows. Responsible for the release of ribosomes from messenger RNA at the termination of protein biosynthesis. May increase the efficiency of translation by recycling ribosomes from one round of translation to another. The chain is Ribosome-recycling factor from Chlorobium phaeobacteroides (strain DSM 266 / SMG 266 / 2430).